Consider the following 87-residue polypeptide: MERTEKKSIIDTFKTHENDTGSPEVQIALLTDRINHLNDHLKTHKKDHHSRRGLLKMVGQRRNLLNYLKDNQIERYREVIARLGLRK.

Belongs to the universal ribosomal protein uS15 family. Part of the 30S ribosomal subunit. Forms a bridge to the 50S subunit in the 70S ribosome, contacting the 23S rRNA.

Functionally, one of the primary rRNA binding proteins, it binds directly to 16S rRNA where it helps nucleate assembly of the platform of the 30S subunit by binding and bridging several RNA helices of the 16S rRNA. Forms an intersubunit bridge (bridge B4) with the 23S rRNA of the 50S subunit in the ribosome. The chain is Small ribosomal subunit protein uS15 from Alkaliphilus metalliredigens (strain QYMF).